The following is a 338-amino-acid chain: Anthranilate phosphoribosyltransferase (338 aa).

5-phospho-alpha-D-ribose 1-diphosphate contacts are provided by residues Gly81, 84–85 (GD), Ser89, 91–94 (NVST), 109–117 (KHGNRALSS), and Ala121. Gly81 is a binding site for anthranilate. Ser93 contacts Mg(2+). Position 112 (Asn112) interacts with anthranilate. Residue Arg167 coordinates anthranilate. Mg(2+) is bound by residues Asp226 and Glu227.

Belongs to the anthranilate phosphoribosyltransferase family. In terms of assembly, homodimer. It depends on Mg(2+) as a cofactor.

The enzyme catalyses N-(5-phospho-beta-D-ribosyl)anthranilate + diphosphate = 5-phospho-alpha-D-ribose 1-diphosphate + anthranilate. It functions in the pathway amino-acid biosynthesis; L-tryptophan biosynthesis; L-tryptophan from chorismate: step 2/5. Its function is as follows. Catalyzes the transfer of the phosphoribosyl group of 5-phosphorylribose-1-pyrophosphate (PRPP) to anthranilate to yield N-(5'-phosphoribosyl)-anthranilate (PRA). This is Anthranilate phosphoribosyltransferase from Rhodopseudomonas palustris (strain BisB5).